We begin with the raw amino-acid sequence, 44 residues long: Conotoxin Sr5.5 (44 aa).

An N-terminal signal peptide occupies residues 1 to 19; sequence MRCLPVFVILLLLIASAPS. A propeptide spanning residues 20–29 is cleaved from the precursor; the sequence is VDDNAKGTQH.

Belongs to the conotoxin T superfamily. Contains 2 disulfide bonds that can be either 'C1-C3, C2-C4' or 'C1-C4, C2-C3', since these disulfide connectivities have been observed for conotoxins with cysteine framework V (for examples, see AC P0DQQ7 and AC P81755). Expressed by the venom duct.

It is found in the secreted. This is Conotoxin Sr5.5 from Conus spurius (Alphabet cone).